Reading from the N-terminus, the 563-residue chain is Inorganic phosphate transporter PT2 (563 aa).

Disordered stretches follow at residues 1 to 51 (MAPR…SGEE) and 67 to 96 (DGGA…PAYS). Residues 1–127 (MAPRYHSAAE…NGEKQSLLVP (127 aa)) are Extracellular-facing. The helical transmembrane segment at 128-148 (CLAVFSSNYNFTVTSIALFLM) threads the bilayer. Over 149–168 (NQDPLYKDASDTVVGSSTVK) the chain is Cytoplasmic. A helical transmembrane segment spans residues 169 to 189 (MLSYAGAIVGMCTMGYLGDLI). Over 190–192 (GRR) the chain is Extracellular. The helical transmembrane segment at 193-213 (LAMILTLALVFIGALLSSICA) threads the bilayer. Residues 214 to 217 (WGDG) are Cytoplasmic-facing. A helical transmembrane segment spans residues 218 to 238 (VTVLVIMGVCRFVLGVGSGGV). Over 239 to 263 (YPLSAVSAAEGAGSEKSNDRSMRVS) the chain is Extracellular. A helical membrane pass occupies residues 264–284 (WAYSMNVPGIMFPYIVALVLW). Over 285-291 (CTTHNVD) the chain is Cytoplasmic. The helical transmembrane segment at 292–312 (VCFRILLGFGALPALLIWLPA) threads the bilayer. Residues 313–342 (WRMKEDRAYVAKDFAKHLAGVFVSRSYWRQ) are Extracellular-facing. The helical transmembrane segment at 343 to 363 (LLGTGVCWLLYDVTAYGILLV) threads the bilayer. Topologically, residues 364–380 (QPEITQSIWGNSSSVTD) are cytoplasmic. A helical membrane pass occupies residues 381-401 (VIWQNIILNGMGIPGCFMGIL). Residues 402 to 412 (VLKQMGVKWLQ) are Extracellular-facing. The chain crosses the membrane as a helical span at residues 413–433 (FWGFVGLAVSAFLMAATVEIL). The Cytoplasmic segment spans residues 434–440 (QGKAWAQ). Residues 441-461 (LVLLCIVNFFINWGASITTFI) traverse the membrane as a helical segment. The Extracellular portion of the chain corresponds to 462–477 (LPSLVFPPEVRSTYSG). Residues 478–498 (ISAALGKIGAVGGIYTMKAIL) traverse the membrane as a helical segment. Topologically, residues 499–504 (STGGLT) are cytoplasmic. Residues 505–525 (PMMICAGVPSLAAAILTWFYV) form a helical membrane-spanning segment. At 526-563 (DPVPNTLRSSFLQCFGSLAGSCPFIDCRKFRRGSRAFE) the chain is on the extracellular side.

This sequence belongs to the major facilitator superfamily. Phosphate:H(+) symporter (TC 2.A.1.9) family.

It is found in the cell membrane. The catalysed reaction is phosphate(in) = phosphate(out). Inorganic phosphate transporter. Activity is likely sodium-independent. Exhibits higher activity under acidic pH, implying that either the monovalent form of phosphate is the preferred substrate or the transport activity is H(+)-dependent. This chain is Inorganic phosphate transporter PT2, found in Toxoplasma gondii (strain ATCC 50861 / VEG).